A 65-amino-acid chain; its full sequence is Putative beta-neurotoxin RjAa12 (65 aa).

The 64-residue stretch at 1–64 (KEGYPVGRDG…VWDSSTNKCG (64 aa)) folds into the LCN-type CS-alpha/beta domain. 4 cysteine pairs are disulfide-bonded: Cys-11/Cys-63, Cys-15/Cys-37, Cys-22/Cys-44, and Cys-26/Cys-46.

Belongs to the long (4 C-C) scorpion toxin superfamily. Sodium channel inhibitor family. Beta subfamily. In terms of tissue distribution, expressed by the venom gland.

Its subcellular location is the secreted. Its function is as follows. Beta toxins bind voltage-independently at site-4 of sodium channels (Nav) and shift the voltage of activation toward more negative potentials thereby affecting sodium channel activation and promoting spontaneous and repetitive firing. This is Putative beta-neurotoxin RjAa12 from Rhopalurus junceus (Caribbean blue scorpion).